The chain runs to 227 residues: Phosphoribosylformylglycinamidine synthase subunit PurQ (227 aa).

Positions phenylalanine 3–alanine 225 constitute a Glutamine amidotransferase type-1 domain. Cysteine 86 functions as the Nucleophile in the catalytic mechanism. Catalysis depends on residues histidine 194 and glutamate 196.

Part of the FGAM synthase complex composed of 1 PurL, 1 PurQ and 2 PurS subunits.

It is found in the cytoplasm. The catalysed reaction is N(2)-formyl-N(1)-(5-phospho-beta-D-ribosyl)glycinamide + L-glutamine + ATP + H2O = 2-formamido-N(1)-(5-O-phospho-beta-D-ribosyl)acetamidine + L-glutamate + ADP + phosphate + H(+). It catalyses the reaction L-glutamine + H2O = L-glutamate + NH4(+). The protein operates within purine metabolism; IMP biosynthesis via de novo pathway; 5-amino-1-(5-phospho-D-ribosyl)imidazole from N(2)-formyl-N(1)-(5-phospho-D-ribosyl)glycinamide: step 1/2. Part of the phosphoribosylformylglycinamidine synthase complex involved in the purines biosynthetic pathway. Catalyzes the ATP-dependent conversion of formylglycinamide ribonucleotide (FGAR) and glutamine to yield formylglycinamidine ribonucleotide (FGAM) and glutamate. The FGAM synthase complex is composed of three subunits. PurQ produces an ammonia molecule by converting glutamine to glutamate. PurL transfers the ammonia molecule to FGAR to form FGAM in an ATP-dependent manner. PurS interacts with PurQ and PurL and is thought to assist in the transfer of the ammonia molecule from PurQ to PurL. This Bacillus licheniformis (strain ATCC 14580 / DSM 13 / JCM 2505 / CCUG 7422 / NBRC 12200 / NCIMB 9375 / NCTC 10341 / NRRL NRS-1264 / Gibson 46) protein is Phosphoribosylformylglycinamidine synthase subunit PurQ.